The primary structure comprises 133 residues: Putative HTH-type transcriptional regulator YwnA (133 aa).

The HTH rrf2-type domain occupies 1-130; the sequence is MINSRLAVAI…ASKSLKDVMN (130 aa). Positions 24–47 form a DNA-binding region, H-T-H motif; it reads SEIIADSVNTNPVVVRRMISLLKK.

This chain is Putative HTH-type transcriptional regulator YwnA (ywnA), found in Bacillus subtilis (strain 168).